The following is a 321-amino-acid chain: uncharacterized protein (321 aa).

This is an uncharacterized protein from Galliformes (FAdV-1).